Here is a 168-residue protein sequence, read N- to C-terminus: Phosphopantetheine adenylyltransferase (168 aa).

T11 contacts substrate. ATP contacts are provided by residues 11-12 (TF) and H19. Substrate-binding residues include K43, T75, and R89. ATP-binding positions include 90–92 (GIR), E100, and 125–131 (WSYMSSS).

The protein belongs to the bacterial CoaD family. Homohexamer. Mg(2+) is required as a cofactor.

It is found in the cytoplasm. It catalyses the reaction (R)-4'-phosphopantetheine + ATP + H(+) = 3'-dephospho-CoA + diphosphate. It functions in the pathway cofactor biosynthesis; coenzyme A biosynthesis; CoA from (R)-pantothenate: step 4/5. Its function is as follows. Reversibly transfers an adenylyl group from ATP to 4'-phosphopantetheine, yielding dephospho-CoA (dPCoA) and pyrophosphate. In Wigglesworthia glossinidia brevipalpis, this protein is Phosphopantetheine adenylyltransferase.